The primary structure comprises 623 residues: MSTSSSDPFFNFTKSSFRSAAAQKASATSLPPLPGPDKKVPGMDIKYDVVIVGSGPIGCTYARELVEAGYKVAMFDIGEIDSGLKIGAHKKNTVEYQKNIDKFVNVIQGQLMSVSVPVNTLVIDTLSPTSWQASSFFVRNGSNPEQDPLRNLSGQAVTRVVGGMSTHWTCATPRFDREQRPLLVKDDQDADDAEWDRLYTKAESYFKTGTDQFKESIRHNLVLNKLAEEYKGQRDFQQIPLAATRRSPTFVEWSSANTVFDLQNRPNTDAPNERFNLFPAVACERVVRNTSNSEIESLHIHDLISGDRFEIKADVFVLTAGAVHNAQLLVNSGFGQLGRPDPANPPQLLPSLGSYITEQSLVFCQTVMSTELIDSVKSDMIIRGNPGDLGYSVTYTPGAETNKHPDWWNEKVKNHMMQHQEDPLPIPFEDPEPQVTTLFQPSHPWHTQIHRDAFSYGAVQQSIDSRLIVDWRFFGRTEPKEENKLWFSDKITDTYNMPQPTFDFRFPAGRTSKEAEDMMTDMCVMSAKIGGFLPGSLPQFMEPGLVLHLGGTHRMGFDEQEDKCCVNTDSRVFGFKNLFLGGCGNIPTAYGANPTLTAMSLAIKSCEYIKNNFTPSPFTDQAE.

The N-terminal stretch at 1-27 (MSTSSSDPFFNFTKSSFRSAAAQKASA) is a signal peptide. Positions 28–38 (TSLPPLPGPDK) are excised as a propeptide. The residue at position 167 (H167) is a Tele-8alpha-FAD histidine. Substrate is bound by residues Q448 and H450. H548 functions as the Proton acceptor in the catalytic mechanism. Residue N593 is part of the active site.

It belongs to the GMC oxidoreductase family. In terms of assembly, homotetramer. The cofactor is FAD. In terms of processing, not glycosylated.

It is found in the periplasm. It catalyses the reaction D-glucose + O2 = 2-dehydro-D-glucose + H2O2. Catalyzes the oxidation of various aldopyranoses and disaccharides on carbon-2 to the corresponding 2-keto sugars concomitant with the reduction of O(2) to H(2)O(2). Plays an important role in lignin degradation of wood rot fungi by supplying the essential cosubstrate H(2)O(2) for the ligninolytic peroxidases, lignin peroxidase and manganese-dependent peroxidase. The preferred substrate is D-glucose which is converted to 2-dehydro-D-glucose. Also acts on D-xylose, together with D-glucose the major sugars derived from wood, on L-sorbose, D-galactose and 1,5-anhydroglucitol, a diagnostic marker of diabetes mellitus. This Trametes versicolor (White-rot fungus) protein is Pyranose 2-oxidase (P2OX).